A 329-amino-acid chain; its full sequence is Holliday junction branch migration complex subunit RuvB (329 aa).

Residues 1 to 181 form a large ATPase domain (RuvB-L) region; the sequence is MNELLHQHKA…FGIPLHLEFY (181 aa). ATP is bound by residues Leu-20, Arg-21, Gly-62, Lys-65, Thr-66, Thr-67, Arg-171, Tyr-181, and Arg-218. Thr-66 is a Mg(2+) binding site. The segment at 182–252 is small ATPAse domain (RuvB-S); sequence SVEELMLVIK…FADSALFNLG (71 aa). Residues 255–329 form a head domain (RuvB-H) region; that stretch reads KSGLDKMDIK…IEHLMNYKYI (75 aa). 2 residues coordinate DNA: Arg-308 and Arg-313.

The protein belongs to the RuvB family. In terms of assembly, homohexamer. Forms an RuvA(8)-RuvB(12)-Holliday junction (HJ) complex. HJ DNA is sandwiched between 2 RuvA tetramers; dsDNA enters through RuvA and exits via RuvB. An RuvB hexamer assembles on each DNA strand where it exits the tetramer. Each RuvB hexamer is contacted by two RuvA subunits (via domain III) on 2 adjacent RuvB subunits; this complex drives branch migration. In the full resolvosome a probable DNA-RuvA(4)-RuvB(12)-RuvC(2) complex forms which resolves the HJ.

It is found in the cytoplasm. The enzyme catalyses ATP + H2O = ADP + phosphate + H(+). The RuvA-RuvB-RuvC complex processes Holliday junction (HJ) DNA during genetic recombination and DNA repair, while the RuvA-RuvB complex plays an important role in the rescue of blocked DNA replication forks via replication fork reversal (RFR). RuvA specifically binds to HJ cruciform DNA, conferring on it an open structure. The RuvB hexamer acts as an ATP-dependent pump, pulling dsDNA into and through the RuvAB complex. RuvB forms 2 homohexamers on either side of HJ DNA bound by 1 or 2 RuvA tetramers; 4 subunits per hexamer contact DNA at a time. Coordinated motions by a converter formed by DNA-disengaged RuvB subunits stimulates ATP hydrolysis and nucleotide exchange. Immobilization of the converter enables RuvB to convert the ATP-contained energy into a lever motion, pulling 2 nucleotides of DNA out of the RuvA tetramer per ATP hydrolyzed, thus driving DNA branch migration. The RuvB motors rotate together with the DNA substrate, which together with the progressing nucleotide cycle form the mechanistic basis for DNA recombination by continuous HJ branch migration. Branch migration allows RuvC to scan DNA until it finds its consensus sequence, where it cleaves and resolves cruciform DNA. In Anaplasma phagocytophilum (strain HZ), this protein is Holliday junction branch migration complex subunit RuvB.